Here is a 291-residue protein sequence, read N- to C-terminus: Lipoyl synthase 1 (291 aa).

Residues C34, C39, C45, C60, C64, C67, and S274 each contribute to the [4Fe-4S] cluster site. The Radical SAM core domain occupies 46–263 (FQAGTATFLI…QVYGEELGFL (218 aa)).

It belongs to the radical SAM superfamily. Lipoyl synthase family. It depends on [4Fe-4S] cluster as a cofactor.

Its subcellular location is the cytoplasm. It catalyses the reaction [[Fe-S] cluster scaffold protein carrying a second [4Fe-4S](2+) cluster] + N(6)-octanoyl-L-lysyl-[protein] + 2 oxidized [2Fe-2S]-[ferredoxin] + 2 S-adenosyl-L-methionine + 4 H(+) = [[Fe-S] cluster scaffold protein] + N(6)-[(R)-dihydrolipoyl]-L-lysyl-[protein] + 4 Fe(3+) + 2 hydrogen sulfide + 2 5'-deoxyadenosine + 2 L-methionine + 2 reduced [2Fe-2S]-[ferredoxin]. It participates in protein modification; protein lipoylation via endogenous pathway; protein N(6)-(lipoyl)lysine from octanoyl-[acyl-carrier-protein]: step 2/2. Its function is as follows. Catalyzes the radical-mediated insertion of two sulfur atoms into the C-6 and C-8 positions of the octanoyl moiety bound to the lipoyl domains of lipoate-dependent enzymes, thereby converting the octanoylated domains into lipoylated derivatives. The polypeptide is Lipoyl synthase 1 (Nostoc sp. (strain PCC 7120 / SAG 25.82 / UTEX 2576)).